The primary structure comprises 257 residues: Type III pantothenate kinase (257 aa).

6–13 is an ATP binding site; sequence DCGNTNTV. 107–110 contacts substrate; sequence GPDR. Catalysis depends on Asp109, which acts as the Proton acceptor. K(+) is bound at residue Asp129. An ATP-binding site is contributed by Thr132. Substrate is bound at residue Thr184.

This sequence belongs to the type III pantothenate kinase family. Homodimer. NH4(+) is required as a cofactor. The cofactor is K(+).

It localises to the cytoplasm. It catalyses the reaction (R)-pantothenate + ATP = (R)-4'-phosphopantothenate + ADP + H(+). It functions in the pathway cofactor biosynthesis; coenzyme A biosynthesis; CoA from (R)-pantothenate: step 1/5. In terms of biological role, catalyzes the phosphorylation of pantothenate (Pan), the first step in CoA biosynthesis. This Cereibacter sphaeroides (strain ATCC 17025 / ATH 2.4.3) (Rhodobacter sphaeroides) protein is Type III pantothenate kinase.